A 211-amino-acid chain; its full sequence is Ribonuclease T (211 aa).

The region spanning 24-198 (VVVDVETGGF…YDAEKTAHLF (175 aa)) is the Exonuclease domain. Mg(2+) is bound by residues D27, E29, H185, and D190. H185 acts as the Proton donor/acceptor in catalysis.

Belongs to the RNase T family. In terms of assembly, homodimer. Requires Mg(2+) as cofactor.

Trims short 3' overhangs of a variety of RNA species, leaving a one or two nucleotide 3' overhang. Responsible for the end-turnover of tRNA: specifically removes the terminal AMP residue from uncharged tRNA (tRNA-C-C-A). Also appears to be involved in tRNA biosynthesis. The chain is Ribonuclease T from Xylella fastidiosa (strain Temecula1 / ATCC 700964).